The chain runs to 312 residues: Methionyl-tRNA formyltransferase (312 aa).

109–112 (SLLP) contacts (6S)-5,6,7,8-tetrahydrofolate.

The protein belongs to the Fmt family.

The enzyme catalyses L-methionyl-tRNA(fMet) + (6R)-10-formyltetrahydrofolate = N-formyl-L-methionyl-tRNA(fMet) + (6S)-5,6,7,8-tetrahydrofolate + H(+). Its function is as follows. Attaches a formyl group to the free amino group of methionyl-tRNA(fMet). The formyl group appears to play a dual role in the initiator identity of N-formylmethionyl-tRNA by promoting its recognition by IF2 and preventing the misappropriation of this tRNA by the elongation apparatus. This Caulobacter sp. (strain K31) protein is Methionyl-tRNA formyltransferase.